The following is a 325-amino-acid chain: Protease HtpX homolog (325 aa).

A helical membrane pass occupies residues Ile-20–Met-40. His-130 is a binding site for Zn(2+). The active site involves Glu-131. His-134 is a binding site for Zn(2+). 2 helical membrane-spanning segments follow: residues Ile-145–Gly-165 and Val-173–Val-193. Glu-202 is a binding site for Zn(2+). Positions Ala-288–Ser-325 are disordered. The span at Arg-306–Ser-325 shows a compositional bias: low complexity.

The protein belongs to the peptidase M48B family. The cofactor is Zn(2+).

The protein resides in the cell inner membrane. This Brucella suis (strain ATCC 23445 / NCTC 10510) protein is Protease HtpX homolog.